The chain runs to 546 residues: G1/S-specific cyclin CLN1 (546 aa).

Residues 224–265 (SNGKEWSCKRKSQSSDDSDATVEEHISSSPQSTGLDGDTTTM) are disordered.

It belongs to the cyclin family.

Its function is as follows. Essential for the control of the cell cycle at the G1/S (start) transition. Interacts with the CDC28 protein kinase to form MPF. This chain is G1/S-specific cyclin CLN1 (CLN1), found in Saccharomyces cerevisiae (strain ATCC 204508 / S288c) (Baker's yeast).